Reading from the N-terminus, the 387-residue chain is 3-ketoacyl-CoA thiolase (387 aa).

Cys91 acts as the Acyl-thioester intermediate in catalysis. Residues His343 and Cys373 each act as proton acceptor in the active site.

The protein belongs to the thiolase-like superfamily. Thiolase family. Heterotetramer of two alpha chains (FadB) and two beta chains (FadA).

The protein resides in the cytoplasm. It catalyses the reaction an acyl-CoA + acetyl-CoA = a 3-oxoacyl-CoA + CoA. The protein operates within lipid metabolism; fatty acid beta-oxidation. In terms of biological role, catalyzes the final step of fatty acid oxidation in which acetyl-CoA is released and the CoA ester of a fatty acid two carbons shorter is formed. This chain is 3-ketoacyl-CoA thiolase, found in Vibrio cholerae serotype O1 (strain ATCC 39315 / El Tor Inaba N16961).